The following is a 148-amino-acid chain: MKVILLERINKLGRLGDVVEVRPGYGRNFLVPQGKAVVANQRNLEDFAARKAALEQVEAERLLAAQQRAAALADAMVTIALQAGEDGRLFGSVGLHDISAALAALGHEVAHSEIRLAGGPIKRIGEFPVRVHLHPEVELDVMVFVERA.

This sequence belongs to the bacterial ribosomal protein bL9 family.

Functionally, binds to the 23S rRNA. This Acidithiobacillus ferrooxidans (strain ATCC 23270 / DSM 14882 / CIP 104768 / NCIMB 8455) (Ferrobacillus ferrooxidans (strain ATCC 23270)) protein is Large ribosomal subunit protein bL9.